A 1207-amino-acid chain; its full sequence is ATP-dependent helicase/nuclease subunit A (1207 aa).

In terms of domain architecture, UvrD-like helicase ATP-binding spans 2–472 (PQFTKEQQQA…ILLSDNFRST (471 aa)). Residue 23 to 30 (ASAGSGKT) participates in ATP binding. The region spanning 492 to 783 (GGIDYSKEGQ…RLMTIHGSKG (292 aa)) is the UvrD-like helicase C-terminal domain.

The protein belongs to the helicase family. AddA subfamily. As to quaternary structure, heterodimer of AddA and AddB/RexB. Mg(2+) is required as a cofactor.

It catalyses the reaction Couples ATP hydrolysis with the unwinding of duplex DNA by translocating in the 3'-5' direction.. It carries out the reaction ATP + H2O = ADP + phosphate + H(+). Functionally, the heterodimer acts as both an ATP-dependent DNA helicase and an ATP-dependent, dual-direction single-stranded exonuclease. Recognizes the chi site generating a DNA molecule suitable for the initiation of homologous recombination. The AddA nuclease domain is required for chi fragment generation; this subunit has the helicase and 3' -&gt; 5' nuclease activities. The chain is ATP-dependent helicase/nuclease subunit A from Lactobacillus acidophilus (strain ATCC 700396 / NCK56 / N2 / NCFM).